We begin with the raw amino-acid sequence, 345 residues long: Aspartate--ammonia ligase (345 aa).

This sequence belongs to the class-II aminoacyl-tRNA synthetase family. AsnA subfamily.

It is found in the cytoplasm. The catalysed reaction is L-aspartate + NH4(+) + ATP = L-asparagine + AMP + diphosphate + H(+). It functions in the pathway amino-acid biosynthesis; L-asparagine biosynthesis; L-asparagine from L-aspartate (ammonia route): step 1/1. The chain is Aspartate--ammonia ligase from Bacteroides thetaiotaomicron (strain ATCC 29148 / DSM 2079 / JCM 5827 / CCUG 10774 / NCTC 10582 / VPI-5482 / E50).